We begin with the raw amino-acid sequence, 470 residues long: Pheromone a factor receptor (470 aa).

At 1–5 the chain is on the extracellular side; that stretch reads MSYKS. Residues 6-23 traverse the membrane as a helical segment; it reads AIIGLCLLAVILLAPPLA. Residues 24–29 are Cytoplasmic-facing; that stretch reads WHSHTK. A helical membrane pass occupies residues 30 to 53; it reads NIPAIILITWLLTMNLTCIVDAAI. Topologically, residues 54 to 70 are extracellular; sequence WSDDDFLTRWDGKGWCD. A helical transmembrane segment spans residues 71-98; sequence IVIKLQVGANIGISCAVTNIIYNLHTIL. Residues 99-116 are Cytoplasmic-facing; it reads KADSVLPDLSSWTKIVKD. Residues 117-134 form a helical membrane-spanning segment; it reads LVISLFTPVMVMGFSYLL. At 135-155 the chain is on the extracellular side; that stretch reads QVFRYGIARYNGCQNLLSPTW. A helical transmembrane segment spans residues 156-183; sequence ITTVLYTMWMLIWSFVGAVYATLVLFVF. Residues 184-205 lie on the Cytoplasmic side of the membrane; the sequence is YKKRKDVRDILHCTNSGLNLTR. Residues 206-228 form a helical membrane-spanning segment; sequence FARLLIFCFIIILVMFPFSVYTF. At 229 to 266 the chain is on the extracellular side; that stretch reads VQDLQQVEGHYTFKNTHSSTIWNTIIKFDPGRPIYNIW. Residues 267-285 form a helical membrane-spanning segment; the sequence is LYVLMSYLVFLIFGLGSDA. The Cytoplasmic segment spans residues 286–470; that stretch reads LHMYSKFLRS…EHSSENTAGP (185 aa). The segment at 300-470 is hydrophilic; it reads FVLDMWKRFI…EHSSENTAGP (171 aa). Residues 440–470 form a disordered region; the sequence is NFEGESLCYSPASKEENSSSNEHSSENTAGP.

Belongs to the G-protein coupled receptor 4 family.

It localises to the membrane. Functionally, receptor for the peptide pheromone a factor. This is Pheromone a factor receptor (STE3) from Saccharomyces cerevisiae (strain ATCC 204508 / S288c) (Baker's yeast).